We begin with the raw amino-acid sequence, 757 residues long: 5-methyltetrahydropteroyltriglutamate--homocysteine methyltransferase (757 aa).

Residues Lys-18 and Asn-116 each coordinate 5-methyltetrahydropteroyltri-L-glutamate. 437–439 (IGS) is an L-homocysteine binding site. L-methionine-binding positions include 437–439 (IGS) and Glu-490. Residues 521–522 (RC) and Trp-567 each bind 5-methyltetrahydropteroyltri-L-glutamate. Residue Asp-605 participates in L-homocysteine binding. Position 605 (Asp-605) interacts with L-methionine. His-647, Cys-649, His-658, Asp-662, and Glu-671 together coordinate Zn(2+). His-701 acts as the Proton donor in catalysis. Residue Cys-733 participates in Zn(2+) binding.

It belongs to the vitamin-B12 independent methionine synthase family. It depends on Zn(2+) as a cofactor. In terms of tissue distribution, expressed in pollen (at protein level).

The catalysed reaction is 5-methyltetrahydropteroyltri-L-glutamate + L-homocysteine = tetrahydropteroyltri-L-glutamate + L-methionine. It functions in the pathway amino-acid biosynthesis; L-methionine biosynthesis via de novo pathway; L-methionine from L-homocysteine (MetE route): step 1/1. In terms of biological role, catalyzes the transfer of a methyl group from 5-methyltetrahydrofolate to homocysteine resulting in methionine formation. The chain is 5-methyltetrahydropteroyltriglutamate--homocysteine methyltransferase from Kali turgidum (Prickly saltwort).